Here is a 29-residue protein sequence, read N- to C-terminus: Cytochrome b6-f complex subunit 8 (29 aa).

Residues 3-23 traverse the membrane as a helical segment; it reads IVSLAWAALMIVFTFSLSLVV.

This sequence belongs to the PetN family. As to quaternary structure, the 4 large subunits of the cytochrome b6-f complex are cytochrome b6, subunit IV (17 kDa polypeptide, PetD), cytochrome f and the Rieske protein, while the 4 small subunits are PetG, PetL, PetM and PetN. The complex functions as a dimer.

It localises to the plastid membrane. In terms of biological role, component of the cytochrome b6-f complex, which mediates electron transfer between photosystem II (PSII) and photosystem I (PSI), cyclic electron flow around PSI, and state transitions. This Cuscuta exaltata (Tall dodder) protein is Cytochrome b6-f complex subunit 8.